Consider the following 196-residue polypeptide: Cupin-domain-containing oxidoreductase srdB (196 aa).

In terms of domain architecture, Cupin type-2 spans 92-156; sequence DFAPGCKSNM…TSDEKPARML (65 aa).

The protein belongs to the virC family.

Its function is as follows. Cupin-domain-containing oxidoreductase; part of the gene cluster that mediates the biosynthesis of sordarial, a salicylic aldehyde structurally related to the phytotoxin pyriculol. The most interesting aspect of this pathway is formation of an aromatic product from the highly reducing polyketide synthase srdA. SrdA synthesizes a reduced polyketide chain from one molecule of acetyl-CoA and five molecules of malonyl-CoA. The polyketide chain is then reductively released as an aldehyde. The oxidoreductases srdC, srdD and srdE then oxidize one of the hydroxy groups to facilitate the intramolecular aldol condensation, followed by dehydration to yield a salicylic aldehyde. This aldehyde can undergo facile reduction by endogenous reductases to yield the alcohol 1-hydroxy-2-hydroxymethyl-3-pent-1,3-dienylbenzene. The flavin-dependent srdI counteract against the propensity of the aldehydes to be reduced under physiological conditions and is responsible for reoxidizing 1-hydroxy-2-hydroxymethyl-3-pent-1,3-dienylbenzene back to the salicylic aldehyde. This salicylic aldehyde is then selectively epoxidized by the cupin-domain-containing oxidoreductase srdB to yield the epoxide, which can be hydrolyzed stereoselectively by the hydrolase srdG to give the final product sordarial. In Neurospora crassa (strain ATCC 24698 / 74-OR23-1A / CBS 708.71 / DSM 1257 / FGSC 987), this protein is Cupin-domain-containing oxidoreductase srdB.